A 329-amino-acid polypeptide reads, in one-letter code: MAVPPVEMYSGSFWNRMRKPLPLRTQVIRFTVVFVIVSFILAVALQITHERMPDPKVTKPLPDLGFELLTKVPGMYVLADCCIGFLNILSVFTAFKLYLLHRHCVGSGEPELPCNIPGVSRFFLSVWLCKENCRIELRNIHTIAWIRFITSYALLLLFRSAVIVMTSLPAPDDLCQNPPKIENPVKNVILTVLTAGAGSIHCGDLMYSGHTVILTLHLMFHWIYGAMVHWSFRPVVTVVAIFGYYCIVASRFHYTDDVLVAIYLTIATFIAVGHNADGAPWQLQLFIRWWPCCGANSREVTEDSQPVMVAFKSEAAGQSSRKVVDERNH.

Over 1–26 (MAVPPVEMYSGSFWNRMRKPLPLRTQ) the chain is Cytoplasmic. A helical transmembrane segment spans residues 27–47 (VIRFTVVFVIVSFILAVALQI). Topologically, residues 48–74 (THERMPDPKVTKPLPDLGFELLTKVPG) are extracellular. Residues 75–95 (MYVLADCCIGFLNILSVFTAF) form a helical membrane-spanning segment. The Cytoplasmic segment spans residues 96 to 147 (KLYLLHRHCVGSGEPELPCNIPGVSRFFLSVWLCKENCRIELRNIHTIAWIR). Residues 148 to 168 (FITSYALLLLFRSAVIVMTSL) form a helical membrane-spanning segment. Residues 169-211 (PAPDDLCQNPPKIENPVKNVILTVLTAGAGSIHCGDLMYSGHT) are Extracellular-facing. A helical membrane pass occupies residues 212–232 (VILTLHLMFHWIYGAMVHWSF). Residue arginine 233 is a topological domain, cytoplasmic. Residues 234–254 (PVVTVVAIFGYYCIVASRFHY) form a helical membrane-spanning segment. Residues 255–257 (TDD) are Extracellular-facing. The chain crosses the membrane as a helical span at residues 258 to 278 (VLVAIYLTIATFIAVGHNADG). Topologically, residues 279-329 (APWQLQLFIRWWPCCGANSREVTEDSQPVMVAFKSEAAGQSSRKVVDERNH) are cytoplasmic.

It belongs to the sphingomyelin synthase family.

Its subcellular location is the membrane. It catalyses the reaction an N-acylsphing-4-enine + a 1,2-diacyl-sn-glycero-3-phosphocholine = a sphingomyelin + a 1,2-diacyl-sn-glycerol. The catalysed reaction is an N-acylsphinganine + a 1,2-diacyl-sn-glycero-3-phosphocholine = an N-acylsphinganine-1-phosphocholine + a 1,2-diacyl-sn-glycerol. The enzyme catalyses an N-acylsphing-4-enine + a 1,2-diacyl-sn-glycero-3-phosphoethanolamine = an N-acylsphing-4-enine 1-phosphoethanolamine + a 1,2-diacyl-sn-glycerol. It carries out the reaction an N-acylsphinganine + a 1,2-diacyl-sn-glycero-3-phosphoethanolamine = an N-acylsphinganine-1-phosphoethanolamine + a 1,2-diacyl-sn-glycerol. In terms of biological role, bifunctional sphingomyelin (SM)/ethanolamine phosphorylceramide (EPC) synthase with minimal inositol phosphorylceramide (IPC) synthase activity. Specificity is likely to be defined by residues in the lumenal catalytic domain that interact with the polar head groups of the phospholipid donors. SM is synthesized by both stages of the parasite life cycle, bloodstream forms (BSF) and procyclic forms (PCF), by transferring the phosphocholine from a 1,2-diacyl-sn-glycero-3-phosphocholine to an N-acylsphing-4-enine (ceramide) or an N-acylsphinganine (dihydroceramide). Similarly, EPC is synthesized by transferring phosphoethanolamine from a 1,2-diacyl-sn-glycero-3-phosphoethanolamine to ceramide or dihydroceramide by BSF and PCF, while IPC is confined to PCF. The ceramide/dihydroceramide ratios are skewed towards dihydroceramide in PCF parasites and ceramide in BSF parasites, this is likely due to differential expression and/or regulation of dihydroceramide desaturase, the enzyme responsible for converting dihydroceramide to ceramide. The protein is Phosphatidylcholine:ceramide cholinephosphotransferase 3 of Trypanosoma brucei brucei.